The following is a 587-amino-acid chain: ATP-dependent lipid A-core flippase (587 aa).

Helical transmembrane passes span 31–51, 68–88, 145–165, 169–189, and 259–279; these read LIAS…LIYL, LKIM…TNFI, GSLI…AVMF, WELT…ITIV, and VQII…TPLI. The ABC transmembrane type-1 domain maps to 32 to 315; that stretch reads IASGIALVFN…LTNVNSQFQR (284 aa). In terms of domain architecture, ABC transporter spans 347-583; it reads LEFKNVSFAY…NGAYKQLYSM (237 aa). 381 to 388 contributes to the ATP binding site; sequence GRSGSGKS.

Belongs to the ABC transporter superfamily. Lipid exporter (TC 3.A.1.106) family. As to quaternary structure, homodimer.

It localises to the cell inner membrane. It catalyses the reaction ATP + H2O + lipid A-core oligosaccharideSide 1 = ADP + phosphate + lipid A-core oligosaccharideSide 2.. Functionally, involved in lipopolysaccharide (LPS) biosynthesis. Translocates lipid A-core from the inner to the outer leaflet of the inner membrane. Transmembrane domains (TMD) form a pore in the inner membrane and the ATP-binding domain (NBD) is responsible for energy generation. This is ATP-dependent lipid A-core flippase from Haemophilus influenzae (strain 86-028NP).